An 817-amino-acid chain; its full sequence is Kinesin-like protein 2 (817 aa).

The segment at 1 to 155 (MEEEGHKSLT…YNDEKSVNAS (155 aa)) is disordered. A compositionally biased stretch (low complexity) spans 8-23 (SLTSHLPQSSSSLSQS). Residues 39–60 (IKTNSSSSNILKPRLSLQNEVN) show a composition bias toward polar residues. Residues 76–86 (SLASVKSSSLA) are compositionally biased toward low complexity. The segment covering 106 to 116 (PISSRSVSASS) has biased composition (polar residues). Positions 122–132 (ASAVSSSLNSS) are enriched in low complexity. The stretch at 155–242 (SALRTTEDRL…VSQKGMESLE (88 aa)) forms a coiled coil. ATP is bound by residues N473, R475, R479, E543, G566, S567, G568, K569, T570, and T778. A Kinesin motor domain is found at 473–807 (NIRVFCRVRP…LRFATKVNNT (335 aa)).

The protein belongs to the TRAFAC class myosin-kinesin ATPase superfamily. Kinesin family. NCD subfamily.

It localises to the cytoplasm. It is found in the cytoskeleton. The protein resides in the spindle. Its subcellular location is the nucleus. It catalyses the reaction ATP + H2O = ADP + phosphate + H(+). The enzyme catalyses ATP + H2O + a kinesin associated with a microtubule at position (n) = ADP + phosphate + a kinesin associated with a microtubule at position (n-1, toward the minus end).. Minus end-directed microtubule (MT) motor that is involved in spindle microtubule shortening, kinetochore capture, and polarization of cytoplasmic microtubules. During mitosis, promotes spindle microtubule shortening by depolymerization. During metaphase, involved in the recapture of kinetochores displaced from the spindle and their transport towards the spindle pole body; promotes transport both by microtubule end-on pulling and by lateral sliding along the side of the microtubule. During interphase, required for the polarization of cytoplasmic microtubules where it orients the microtubule plus ends toward the cell ends and the minus ends toward the cell center. Required for karyogamy. This is Kinesin-like protein 2 from Schizosaccharomyces pombe (strain 972 / ATCC 24843) (Fission yeast).